Reading from the N-terminus, the 44-residue chain is Defensin-like peptide (44 aa).

Disulfide bonds link Cys-7–Cys-32, Cys-18–Cys-40, and Cys-22–Cys-42.

In terms of tissue distribution, hemolymph.

Its subcellular location is the secreted. In terms of biological role, has antibacterial activity against the Gram-positive bacterium S.lutea (MIC=1.9 uM). Lacks antibacterial activity against the Gram-positive bacteria L.monocytogenes and M.luteus, and the Gram-negative bacteria E.coli D31, E.coli ATCC 25922, and S.typhimurium. Has antifungal activity against A.niger (MIC=2.9 uM), C.albicans (MIC=2.9 uM), C.fructus (MIC=2.9 uM), C.wickerhamii (MIC=2.9 uM), P.pastoris (MIC=2.9 uM), P.stiptis (MIC=2.9 uM), P.tannophilus (MIC=2.9 uM), T.harzianum (MIC=2.9 uM), and Z.marxianus (MIC=2.9 uM), but lacks antifungal activity against C.albidus, F.oxysporum, and S.cerevisiae. This is Defensin-like peptide from Galleria mellonella (Greater wax moth).